The chain runs to 800 residues: Phenylalanine--tRNA ligase beta subunit (800 aa).

Positions 39 to 154 constitute a tRNA-binding domain; sequence TKDIKNLVVG…ESQVPGTDAL (116 aa). The 76-residue stretch at 408–483 folds into the B5 domain; that stretch reads AFITPIDITA…RIYGYDDIPS (76 aa). Positions 461, 467, 470, and 471 each coordinate Mg(2+). An FDX-ACB domain is found at 708–800; sequence PRFPGMSRDI…ALIEQGAVIR (93 aa).

Belongs to the phenylalanyl-tRNA synthetase beta subunit family. Type 1 subfamily. Tetramer of two alpha and two beta subunits. It depends on Mg(2+) as a cofactor.

The protein resides in the cytoplasm. The catalysed reaction is tRNA(Phe) + L-phenylalanine + ATP = L-phenylalanyl-tRNA(Phe) + AMP + diphosphate + H(+). The sequence is that of Phenylalanine--tRNA ligase beta subunit from Staphylococcus aureus (strain Mu50 / ATCC 700699).